Consider the following 602-residue polypeptide: Elongation factor 4 (602 aa).

The 183-residue stretch at 6–188 (RNVRNFSIIA…RITEVVPEPA (183 aa)) folds into the tr-type G domain. Residues 18-23 (DHGKST) and 135-138 (NKID) contribute to the GTP site.

It belongs to the TRAFAC class translation factor GTPase superfamily. Classic translation factor GTPase family. LepA subfamily.

The protein localises to the cell membrane. It catalyses the reaction GTP + H2O = GDP + phosphate + H(+). Required for accurate and efficient protein synthesis under certain stress conditions. May act as a fidelity factor of the translation reaction, by catalyzing a one-codon backward translocation of tRNAs on improperly translocated ribosomes. Back-translocation proceeds from a post-translocation (POST) complex to a pre-translocation (PRE) complex, thus giving elongation factor G a second chance to translocate the tRNAs correctly. Binds to ribosomes in a GTP-dependent manner. The sequence is that of Elongation factor 4 from Oceanobacillus iheyensis (strain DSM 14371 / CIP 107618 / JCM 11309 / KCTC 3954 / HTE831).